Here is a 670-residue protein sequence, read N- to C-terminus: UvrABC system protein B (670 aa).

A Helicase ATP-binding domain is found at 28 to 414 (NNFKQGLQEQ…KKIPIVEQII (387 aa)). 41-48 (GATGTGKT) is an ATP binding site. A Beta-hairpin motif is present at residues 94-117 (YYDYYQPEAYVASSDTYIEKDSKI). The region spanning 432-594 (QMDDLYFEIK…VTPTALNKTI (163 aa)) is the Helicase C-terminal domain. In terms of domain architecture, UVR spans 631–666 (NKEIKRLQKMMKEAAKTLDFEKAATLRDLILELEKK).

It belongs to the UvrB family. In terms of assembly, forms a heterotetramer with UvrA during the search for lesions. Interacts with UvrC in an incision complex.

It localises to the cytoplasm. Functionally, the UvrABC repair system catalyzes the recognition and processing of DNA lesions. A damage recognition complex composed of 2 UvrA and 2 UvrB subunits scans DNA for abnormalities. Upon binding of the UvrA(2)B(2) complex to a putative damaged site, the DNA wraps around one UvrB monomer. DNA wrap is dependent on ATP binding by UvrB and probably causes local melting of the DNA helix, facilitating insertion of UvrB beta-hairpin between the DNA strands. Then UvrB probes one DNA strand for the presence of a lesion. If a lesion is found the UvrA subunits dissociate and the UvrB-DNA preincision complex is formed. This complex is subsequently bound by UvrC and the second UvrB is released. If no lesion is found, the DNA wraps around the other UvrB subunit that will check the other stand for damage. In Onion yellows phytoplasma (strain OY-M), this protein is UvrABC system protein B.